We begin with the raw amino-acid sequence, 144 residues long: Large ribosomal subunit protein uL11 (144 aa).

The protein belongs to the universal ribosomal protein uL11 family. Part of the ribosomal stalk of the 50S ribosomal subunit. Interacts with L10 and the large rRNA to form the base of the stalk. L10 forms an elongated spine to which L12 dimers bind in a sequential fashion forming a multimeric L10(L12)X complex. In terms of processing, one or more lysine residues are methylated.

In terms of biological role, forms part of the ribosomal stalk which helps the ribosome interact with GTP-bound translation factors. The chain is Large ribosomal subunit protein uL11 from Neisseria meningitidis serogroup B (strain ATCC BAA-335 / MC58).